The sequence spans 551 residues: Arginine--tRNA ligase (551 aa).

Positions 123–133 (ANPTGPLTIGR) match the 'HIGH' region motif.

Belongs to the class-I aminoacyl-tRNA synthetase family. As to quaternary structure, monomer.

The protein localises to the cytoplasm. It catalyses the reaction tRNA(Arg) + L-arginine + ATP = L-arginyl-tRNA(Arg) + AMP + diphosphate. The sequence is that of Arginine--tRNA ligase from Prosthecochloris aestuarii (strain DSM 271 / SK 413).